Here is a 180-residue protein sequence, read N- to C-terminus: Cytochrome c oxidase assembly protein CtaG (180 aa).

The Cytoplasmic portion of the chain corresponds to 1–8 (MSKKSNKS). A helical; Signal-anchor for type II membrane protein transmembrane segment spans residues 9-29 (LAFSLLGLIVSMVLLSFAAVP). At 30 to 180 (LYNLFCKVTG…SFFKVRDVKK (151 aa)) the chain is on the periplasmic side.

It belongs to the COX11/CtaG family.

Its subcellular location is the cell inner membrane. Exerts its effect at some terminal stage of cytochrome c oxidase synthesis, probably by being involved in the insertion of the copper B into subunit I. In Rickettsia bellii (strain RML369-C), this protein is Cytochrome c oxidase assembly protein CtaG.